The sequence spans 449 residues: Serine--tRNA ligase (449 aa).

Residue 256–258 (TSE) coordinates L-serine. ATP is bound at residue 287 to 289 (RAE). L-serine is bound at residue glutamate 310. Position 374 to 377 (374 to 377 (EISS)) interacts with ATP. Residue serine 410 participates in L-serine binding.

The protein belongs to the class-II aminoacyl-tRNA synthetase family. Type-1 seryl-tRNA synthetase subfamily. As to quaternary structure, homodimer. The tRNA molecule binds across the dimer.

The protein resides in the cytoplasm. It carries out the reaction tRNA(Ser) + L-serine + ATP = L-seryl-tRNA(Ser) + AMP + diphosphate + H(+). The enzyme catalyses tRNA(Sec) + L-serine + ATP = L-seryl-tRNA(Sec) + AMP + diphosphate + H(+). It functions in the pathway aminoacyl-tRNA biosynthesis; selenocysteinyl-tRNA(Sec) biosynthesis; L-seryl-tRNA(Sec) from L-serine and tRNA(Sec): step 1/1. In terms of biological role, catalyzes the attachment of serine to tRNA(Ser). Is also able to aminoacylate tRNA(Sec) with serine, to form the misacylated tRNA L-seryl-tRNA(Sec), which will be further converted into selenocysteinyl-tRNA(Sec). This is Serine--tRNA ligase from Xanthomonas oryzae pv. oryzae (strain MAFF 311018).